Consider the following 197-residue polypeptide: A-type ATP synthase subunit E (197 aa).

The protein belongs to the V-ATPase E subunit family. In terms of assembly, has multiple subunits with at least A(3), B(3), C, D, E, F, H, I and proteolipid K(x).

The protein localises to the cell membrane. In terms of biological role, component of the A-type ATP synthase that produces ATP from ADP in the presence of a proton gradient across the membrane. In Thermococcus gammatolerans (strain DSM 15229 / JCM 11827 / EJ3), this protein is A-type ATP synthase subunit E.